The following is an 83-amino-acid chain: FILVVIALMVIEVKSDGYLMVRAGREKGCKVWCVINNTYCDKDCKLKGGSYGYCYFWKLACYCEGLPESSPDIWTYEKNTCST.

An N-terminal signal peptide occupies residues phenylalanine 1–serine 15. The LCN-type CS-alpha/beta domain occupies aspartate 16–serine 82. 4 disulfide bridges follow: cysteine 29/cysteine 81, cysteine 33/cysteine 54, cysteine 40/cysteine 61, and cysteine 44/cysteine 63.

The protein belongs to the long (4 C-C) scorpion toxin superfamily. Sodium channel inhibitor family. Beta subfamily. As to expression, expressed by the venom gland.

Its subcellular location is the secreted. In terms of biological role, binds voltage-independently at site-4 of sodium channels (Nav) and shift the voltage of activation toward more negative potentials thereby affecting sodium channel activation and promoting spontaneous and repetitive firing. This chain is Neurotoxin LmNaTx34.5, found in Lychas mucronatus (Chinese swimming scorpion).